A 543-amino-acid chain; its full sequence is Efflux pump mokI (543 aa).

The next 13 membrane-spanning stretches (helical) occupy residues 30-50 (LVVTSVTLVVFLMLLDMSIIV), 90-110 (LLTLKYTFLAFLGVFEVGSAL), 125-145 (AVAGMGGSGLTNGAITILASA), 153-173 (LLIGIMMGLSQIAIVCGPLLG), 185-205 (CFYINLPVGALAAILLLAIHI), 233-253 (LLGFVLFAAFAVMISLALEWG), 261-281 (SSVIIGLFCGAGISLVVFGFW), 307-327 (LFLGFFSGALLTFSYYLPIYF), 340-360 (VYMLPGIGGQIVMAIVSGAII), 364-384 (GYYIPWALASGIIVSISAGLV), 394-416 (AAWVMYQFMGGFGRGCGMQTPII), 428-448 (ALGISLAMFGQTFGGSLFLTL), and 509-529 (VGASGATFLFAWGMGQVGLIW).

The protein belongs to the major facilitator superfamily. TCR/Tet family.

The protein localises to the membrane. Its function is as follows. Efflux pump; part of the gene cluster that mediates the biosynthesis of monakolin K, also known as lovastatin, and which acts as a potent competitive inhibitor of HMG-CoA reductase. The sequence is that of Efflux pump mokI from Monascus pilosus (Red mold).